A 517-amino-acid polypeptide reads, in one-letter code: AAA ATPase forming ring-shaped complexes (517 aa).

A coiled-coil region spans residues 25-53 (ARNAKLVELLQASRTKLEEINGRLEALAE). An ATP-binding site is contributed by 233–238 (GNGKTL).

It belongs to the AAA ATPase family. As to quaternary structure, homohexamer. Assembles into a hexameric ring structure.

In Corynebacterium jeikeium (strain K411), this protein is AAA ATPase forming ring-shaped complexes.